The following is a 242-amino-acid chain: MLWLDLGNTRLKYWLTDDIGQIVSHDAKQHLQAPAELLMGLIDRFERYAPDFIGISSVLGDDLNIKVSETLSRLNIPFEFVHVDANYPLMKSAYNDEQLGCDRWLQMLGAVDRTKRQCVIGCGTAVTIDLIDHAEHLGGYIFPSIYLQRESLFSGTKQITISNGTFDNVSQGLTTQDAVHRGILLSIVGAINEISTRHPNFEVIMTGGDAAIIAQHVNRPVRLRDDLLLNGLARYFDHSKQA.

Position 5-12 (5-12 (DLGNTRLK)) interacts with ATP. Substrate is bound by residues Y94 and 100 to 103 (GCDR). D102 (proton acceptor) is an active-site residue. Residue T124 coordinates ATP. T175 is a substrate binding site.

This sequence belongs to the type III pantothenate kinase family. As to quaternary structure, homodimer. NH4(+) serves as cofactor. It depends on K(+) as a cofactor.

Its subcellular location is the cytoplasm. It catalyses the reaction (R)-pantothenate + ATP = (R)-4'-phosphopantothenate + ADP + H(+). It participates in cofactor biosynthesis; coenzyme A biosynthesis; CoA from (R)-pantothenate: step 1/5. Catalyzes the phosphorylation of pantothenate (Pan), the first step in CoA biosynthesis. In Psychrobacter cryohalolentis (strain ATCC BAA-1226 / DSM 17306 / VKM B-2378 / K5), this protein is Type III pantothenate kinase.